The primary structure comprises 442 residues: tRNA(Ile)-lysidine synthase (442 aa).

30 to 35 provides a ligand contact to ATP; it reads SGGLDS.

The protein belongs to the tRNA(Ile)-lysidine synthase family.

It is found in the cytoplasm. The catalysed reaction is cytidine(34) in tRNA(Ile2) + L-lysine + ATP = lysidine(34) in tRNA(Ile2) + AMP + diphosphate + H(+). Functionally, ligates lysine onto the cytidine present at position 34 of the AUA codon-specific tRNA(Ile) that contains the anticodon CAU, in an ATP-dependent manner. Cytidine is converted to lysidine, thus changing the amino acid specificity of the tRNA from methionine to isoleucine. The protein is tRNA(Ile)-lysidine synthase of Pseudomonas fluorescens (strain Pf0-1).